Here is a 196-residue protein sequence, read N- to C-terminus: Glycerol-3-phosphate acyltransferase (196 aa).

5 helical membrane passes run 1–21, 53–73, 78–98, 112–132, and 152–172; these read MIILAALLAYILGSVPFGYLT, AITAIGDVGKGMLAVYIGSLL, GALVASFFVVIGHAYSIFLKF, IMTSIKVTVVVFFIWLTVMLI, and LLFGLDLSYIYLGIFLAVMIF.

This sequence belongs to the PlsY family. As to quaternary structure, probably interacts with PlsX.

Its subcellular location is the cell membrane. It carries out the reaction an acyl phosphate + sn-glycerol 3-phosphate = a 1-acyl-sn-glycero-3-phosphate + phosphate. It functions in the pathway lipid metabolism; phospholipid metabolism. Catalyzes the transfer of an acyl group from acyl-phosphate (acyl-PO(4)) to glycerol-3-phosphate (G3P) to form lysophosphatidic acid (LPA). This enzyme utilizes acyl-phosphate as fatty acyl donor, but not acyl-CoA or acyl-ACP. This is Glycerol-3-phosphate acyltransferase from Carboxydothermus hydrogenoformans (strain ATCC BAA-161 / DSM 6008 / Z-2901).